The following is a 98-amino-acid chain: 10 kDa chaperonin (98 aa).

This sequence belongs to the GroES chaperonin family. As to quaternary structure, forms stable complexes with CPN60 in the presence of ATP.

It is found in the cytoplasm. Seems to function only as a co-chaperone, along with cpn60, and in certain cases is essential for the discharge of biologically active proteins from cpn60. This chain is 10 kDa chaperonin, found in Brassica napus (Rape).